A 288-amino-acid chain; its full sequence is Pantothenate synthetase (288 aa).

30–37 contacts ATP; it reads MGFLHEGH. H37 functions as the Proton donor in the catalytic mechanism. Q61 is a (R)-pantoate binding site. Q61 provides a ligand contact to beta-alanine. 147-150 serves as a coordination point for ATP; that stretch reads GMKD. Position 153 (Q153) interacts with (R)-pantoate. ATP is bound at residue 184–187; that stretch reads KSSR.

It belongs to the pantothenate synthetase family. As to quaternary structure, homodimer.

The protein localises to the cytoplasm. It catalyses the reaction (R)-pantoate + beta-alanine + ATP = (R)-pantothenate + AMP + diphosphate + H(+). It functions in the pathway cofactor biosynthesis; (R)-pantothenate biosynthesis; (R)-pantothenate from (R)-pantoate and beta-alanine: step 1/1. In terms of biological role, catalyzes the condensation of pantoate with beta-alanine in an ATP-dependent reaction via a pantoyl-adenylate intermediate. This Bacillus licheniformis (strain ATCC 14580 / DSM 13 / JCM 2505 / CCUG 7422 / NBRC 12200 / NCIMB 9375 / NCTC 10341 / NRRL NRS-1264 / Gibson 46) protein is Pantothenate synthetase.